We begin with the raw amino-acid sequence, 169 residues long: Lipoprotein signal peptidase (169 aa).

2 consecutive transmembrane segments (helical) span residues 59–79 (PTVL…YVIW) and 84–104 (TTLF…NMID). Catalysis depends on residues Asp-113 and Asp-139. Residues 132–152 (WPIFNIADSAITIGACMLMIF) traverse the membrane as a helical segment.

The protein belongs to the peptidase A8 family.

Its subcellular location is the cell inner membrane. It carries out the reaction Release of signal peptides from bacterial membrane prolipoproteins. Hydrolyzes -Xaa-Yaa-Zaa-|-(S,diacylglyceryl)Cys-, in which Xaa is hydrophobic (preferably Leu), and Yaa (Ala or Ser) and Zaa (Gly or Ala) have small, neutral side chains.. The protein operates within protein modification; lipoprotein biosynthesis (signal peptide cleavage). Functionally, this protein specifically catalyzes the removal of signal peptides from prolipoproteins. This Pelodictyon phaeoclathratiforme (strain DSM 5477 / BU-1) protein is Lipoprotein signal peptidase.